A 150-amino-acid polypeptide reads, in one-letter code: MKVVFLEDVKGQGKKGQIKEVPTGYAQNFLIKKNLAKVATAAALSEVKGQAKAKEKEEAEFLAEAKALKEVLEKDETVVEIKMKVGQTGHTFGAVDKADIAKALKSQFGLKLDKRKIQLINKIQALGTKDVPVKLHRDVTAVVKVKISEA.

The protein belongs to the bacterial ribosomal protein bL9 family.

Functionally, binds to the 23S rRNA. The protein is Large ribosomal subunit protein bL9 of Lactococcus lactis subsp. cremoris (strain MG1363).